The primary structure comprises 246 residues: tRNA pseudouridine synthase A (246 aa).

The Nucleophile role is filled by aspartate 54. Substrate is bound at residue tyrosine 112.

This sequence belongs to the tRNA pseudouridine synthase TruA family. As to quaternary structure, homodimer.

The catalysed reaction is uridine(38/39/40) in tRNA = pseudouridine(38/39/40) in tRNA. In terms of biological role, formation of pseudouridine at positions 38, 39 and 40 in the anticodon stem and loop of transfer RNAs. The chain is tRNA pseudouridine synthase A from Moorella thermoacetica (strain ATCC 39073 / JCM 9320).